The chain runs to 3412 residues: Genome polyprotein (3412 aa).

Topologically, residues Met1–Glu104 are cytoplasmic. The segment at Pro38–Leu72 is hydrophobic; homodimerization of capsid protein C. A propeptide spans Ser102–Gly121 (ER anchor for the capsid protein C, removed in mature form by serine protease NS3). The chain crosses the membrane as a helical span at residues Met105–Val125. Topologically, residues Arg126–Arg244 are extracellular. Asn134 and Asn150 each carry an N-linked (GlcNAc...) asparagine; by host glycan. A helical membrane pass occupies residues Trp245 to Asn265. Over Asn266–Arg270 the chain is Cytoplasmic. Residues Val271–Ser285 form a helical membrane-spanning segment. At Ala286–Leu730 the chain is on the extracellular side. 8 disulfide bridges follow: Cys288-Cys315, Cys345-Cys401, Cys345-Cys406, Cys359-Cys390, Cys377-Cys401, Cys377-Cys406, Cys467-Cys568, and Cys585-Cys615. The fusion peptide stretch occupies residues Asp383–Gly396. The helical transmembrane segment at Phe731–Ile751 threads the bilayer. The Extracellular segment spans residues Asn752–Thr757. The chain crosses the membrane as a helical span at residues Met758–Ala778. Residues Asp779–Glu1132 are Extracellular-facing. Intrachain disulfides connect Cys782–Cys793, Cys833–Cys921, Cys957–Cys1002, Cys1058–Cys1107, Cys1069–Cys1091, and Cys1090–Cys1094. 2 N-linked (GlcNAc...) asparagine; by host glycosylation sites follow: Asn908 and Asn986. A helical transmembrane segment spans residues Val1133–Lys1153. Over Arg1154–Ala1201 the chain is Cytoplasmic. The chain crosses the membrane as a helical span at residues Met1202–Leu1222. The Lumenal portion of the chain corresponds to Arg1223–Pro1287. A helical membrane pass occupies residues Val1288–Val1308. Residues Leu1309–Ser1355 lie on the Cytoplasmic side of the membrane. Residues Ile1356 to Phe1376 form a helical membrane-spanning segment. The Lumenal segment spans residues Gln1377 to Asp1378. Residues Met1379–Ala1399 form a helical membrane-spanning segment. At Gly1400–Leu1456 the chain is on the cytoplasmic side. The interval Leu1407–Val1446 is interacts with and activates NS3 protease. Residues Ala1457–Leu1477 constitute an intramembrane region (helical). Over His1478–Ala2157 the chain is Cytoplasmic. The region spanning Ser1485–Leu1665 is the Peptidase S7 domain. Residues His1537, Asp1561, and Ser1622 each act as charge relay system; for serine protease NS3 activity in the active site. The Helicase ATP-binding domain maps to Pro1669–Gln1825. Positions Lys1673 to Met1676 are important for RNA-binding. Residue Phe1682–Thr1689 coordinates ATP. A DEAH box motif is present at residues Asp1773–His1776. One can recognise a Helicase C-terminal domain in the interval Glu1820–Tyr1997. Lys1877 carries the post-translational modification N6-acetyllysine; by host. The interval Ala1942–Tyr1961 is disordered. Residues Met2158–Phe2178 form a helical membrane-spanning segment. Topologically, residues Met2179 to Arg2186 are lumenal. The segment at residues Met2187–Lys2207 is an intramembrane region (helical). The Lumenal segment spans residues Pro2208–Thr2209. The chain crosses the membrane as a helical span at residues His2210–Gly2230. Over Gln2231–Ala2241 the chain is Cytoplasmic. The chain crosses the membrane as a helical span at residues Tyr2242–Leu2262. Residues Glu2263–Pro2293 are Lumenal-facing. Positions Gly2294–Trp2314 form an intramembrane region, helical. The Lumenal segment spans residues Ile2315 to Ser2360. The chain crosses the membrane as a helical span at residues Ile2361 to Ile2380. The Cytoplasmic portion of the chain corresponds to Leu2381–Pro2421. The helical transmembrane segment at Ala2422–Ala2442 threads the bilayer. At Met2443–Arg2445 the chain is on the lumenal side. A helical transmembrane segment spans residues Thr2446–Glu2466. Over Gly2467–Leu3411 the chain is Cytoplasmic. Residues Gly2508 to Ser2772 form the mRNA cap 0-1 NS5-type MT domain. Residue Ser2563 participates in S-adenosyl-L-methionine binding. Ser2563 is subject to Phosphoserine. Lys2568 (for 2'-O-MTase activity) is an active-site residue. S-adenosyl-L-methionine is bound by residues Gly2593, Trp2594, Thr2611, Leu2612, Asp2638, and Ile2639. Asp2653 functions as the For 2'-O-MTase activity in the catalytic mechanism. Ile2654 provides a ligand contact to S-adenosyl-L-methionine. Catalysis depends on for 2'-O-MTase activity residues Lys2689 and Glu2725. Residue Tyr2727 coordinates S-adenosyl-L-methionine. Residues Arg2879–Arg2912 carry the Nuclear localization signal motif. Zn(2+)-binding residues include Glu2946, His2950, Cys2955, and Cys2958. The RdRp catalytic domain occupies Gly3036 to Ala3188. The Zn(2+) site is built by His3223, Cys3239, and Cys3358.

The protein in the N-terminal section; belongs to the class I-like SAM-binding methyltransferase superfamily. mRNA cap 0-1 NS5-type methyltransferase family. Homodimer. Interacts (via N-terminus) with host EXOC1 (via C-terminus); this interaction results in EXOC1 degradation through the proteasome degradation pathway. In terms of assembly, forms heterodimers with envelope protein E in the endoplasmic reticulum and Golgi. As to quaternary structure, homodimer; in the endoplasmic reticulum and Golgi. Interacts with protein prM. Interacts with non-structural protein 1. Homodimer; Homohexamer when secreted. Interacts with envelope protein E. In terms of assembly, interacts (via N-terminus) with serine protease NS3. As to quaternary structure, forms a heterodimer with serine protease NS3. May form homooligomers. Forms a heterodimer with NS2B. Interacts with non-structural protein 2A (via N-terminus). Interacts with NS4B. Interacts with unphosphorylated RNA-directed RNA polymerase NS5; this interaction stimulates RNA-directed RNA polymerase NS5 guanylyltransferase activity. NS3 interacts with host PDCD6IP; this interaction contributes to virion release. In terms of assembly, interacts with serine protease NS3. As to quaternary structure, homodimer. Interacts with host STAT2; this interaction prevents the establishment of cellular antiviral state. Interacts with serine protease NS3. Interacts with host TRIM23; this interaction leads to NS5 ubiquitination. In terms of processing, specific enzymatic cleavages in vivo yield mature proteins. The nascent capsid protein C contains a C-terminal hydrophobic domain that act as a signal sequence for translocation of prM into the lumen of the ER. Mature capsid protein C is cleaved at a site upstream of this hydrophobic domain by NS3. prM is cleaved in post-Golgi vesicles by a host furin, releasing the mature small envelope protein M, and peptide pr. Non-structural protein 2A-alpha, a C-terminally truncated form of non-structural protein 2A, results from partial cleavage by NS3. Specific enzymatic cleavages in vivo yield mature proteins peptide 2K acts as a signal sequence and is removed from the N-terminus of NS4B by the host signal peptidase in the ER lumen. Signal cleavage at the 2K-4B site requires a prior NS3 protease-mediated cleavage at the 4A-2K site. Cleaved in post-Golgi vesicles by a host furin, releasing the mature small envelope protein M, and peptide pr. This cleavage is incomplete as up to 30% of viral particles still carry uncleaved prM. Post-translationally, N-glycosylated. In terms of processing, N-glycosylated. The excreted form is glycosylated and this is required for efficient secretion of the protein from infected cells. Polyubiquitinated; ubiquitination is probably mediated by host TRIM23 and is prerequisite for NS5-STAT2 interaction. NS5 is not ISGylated or sumoylated. Post-translationally, acetylated by host KAT5. Acetylation modulates NS3 RNA-binding and unwinding activities and plays an important positive role for viral replication. In terms of processing, phosphorylated on serines residues. This phosphorylation may trigger NS5 nuclear localization.

It localises to the virion. It is found in the host nucleus. The protein resides in the host cytoplasm. Its subcellular location is the host perinuclear region. The protein localises to the secreted. It localises to the virion membrane. It is found in the host endoplasmic reticulum membrane. It catalyses the reaction Selective hydrolysis of -Xaa-Xaa-|-Yaa- bonds in which each of the Xaa can be either Arg or Lys and Yaa can be either Ser or Ala.. The catalysed reaction is RNA(n) + a ribonucleoside 5'-triphosphate = RNA(n+1) + diphosphate. It carries out the reaction a ribonucleoside 5'-triphosphate + H2O = a ribonucleoside 5'-diphosphate + phosphate + H(+). The enzyme catalyses ATP + H2O = ADP + phosphate + H(+). It catalyses the reaction a 5'-end (5'-triphosphoguanosine)-ribonucleoside in mRNA + S-adenosyl-L-methionine = a 5'-end (N(7)-methyl 5'-triphosphoguanosine)-ribonucleoside in mRNA + S-adenosyl-L-homocysteine. The catalysed reaction is a 5'-end (N(7)-methyl 5'-triphosphoguanosine)-ribonucleoside in mRNA + S-adenosyl-L-methionine = a 5'-end (N(7)-methyl 5'-triphosphoguanosine)-(2'-O-methyl-ribonucleoside) in mRNA + S-adenosyl-L-homocysteine + H(+). Functionally, plays a role in virus budding by binding to the cell membrane and gathering the viral RNA into a nucleocapsid that forms the core of a mature virus particle. During virus entry, may induce genome penetration into the host cytoplasm after hemifusion induced by the surface proteins. Can migrate to the cell nucleus where it modulates host functions. Its function is as follows. Inhibits RNA silencing by interfering with host Dicer. In terms of biological role, prevents premature fusion activity of envelope proteins in trans-Golgi by binding to envelope protein E at pH6.0. After virion release in extracellular space, gets dissociated from E dimers. Acts as a chaperone for envelope protein E during intracellular virion assembly by masking and inactivating envelope protein E fusion peptide. prM is the only viral peptide matured by host furin in the trans-Golgi network probably to avoid catastrophic activation of the viral fusion activity in acidic Golgi compartment prior to virion release. prM-E cleavage is inefficient, and many virions are only partially matured. These uncleaved prM would play a role in immune evasion. Functionally, may play a role in virus budding. Exerts cytotoxic effects by activating a mitochondrial apoptotic pathway through M ectodomain. May display a viroporin activity. Its function is as follows. Binds to host cell surface receptor and mediates fusion between viral and cellular membranes. Envelope protein is synthesized in the endoplasmic reticulum in the form of heterodimer with protein prM. They play a role in virion budding in the ER, and the newly formed immature particle is covered with 60 spikes composed of heterodimer between precursor prM and envelope protein E. The virion is transported to the Golgi apparatus where the low pH causes dissociation of PrM-E heterodimers and formation of E homodimers. prM-E cleavage is inefficient, and many virions are only partially matured. These uncleaved prM would play a role in immune evasion. In terms of biological role, involved in immune evasion, pathogenesis and viral replication. Once cleaved off the polyprotein, is targeted to three destinations: the viral replication cycle, the plasma membrane and the extracellular compartment. Essential for viral replication. Required for formation of the replication complex and recruitment of other non-structural proteins to the ER-derived membrane structures. Excreted as a hexameric lipoparticle that plays a role against host immune response. Antagonizing the complement function. Binds to the host macrophages and dendritic cells. Inhibits signal transduction originating from Toll-like receptor 3 (TLR3). Component of the viral RNA replication complex that functions in virion assembly and antagonizes the host immune response. Functionally, required cofactor for the serine protease function of NS3. May have membrane-destabilizing activity and form viroporins. Its function is as follows. Displays three enzymatic activities: serine protease, NTPase and RNA helicase. NS3 serine protease, in association with NS2B, performs its autocleavage and cleaves the polyprotein at dibasic sites in the cytoplasm: C-prM, NS2A-NS2B, NS2B-NS3, NS3-NS4A, NS4A-2K and NS4B-NS5. NS3 RNA helicase binds RNA and unwinds dsRNA in the 3' to 5' direction. Also plays a role in virus assembly. In terms of biological role, regulates the ATPase activity of the NS3 helicase activity. NS4A allows NS3 helicase to conserve energy during unwinding. Functions as a signal peptide for NS4B and is required for the interferon antagonism activity of the latter. Functionally, induces the formation of ER-derived membrane vesicles where the viral replication takes place. Inhibits interferon (IFN)-induced host STAT1 phosphorylation and nuclear translocation, thereby preventing the establishment of cellular antiviral state by blocking the IFN-alpha/beta pathway. Its function is as follows. Replicates the viral (+) and (-) RNA genome, and performs the capping of genomes in the cytoplasm. NS5 methylates viral RNA cap at guanine N-7 and ribose 2'-O positions. Besides its role in RNA genome replication, also prevents the establishment of cellular antiviral state by blocking the interferon-alpha/beta (IFN-alpha/beta) signaling pathway. IFN-I induces binding of NS5 to host IFN-activated transcription factor STAT2, preventing its transcriptional activity. Host TRIM23 is the E3 ligase that interacts with and polyubiquitinates NS5 to promote its binding to STAT2 and trigger IFN-I signaling inhibition. The polypeptide is Genome polyprotein (Yellow fever virus (isolate Ethiopia/Couma/1961) (YFV)).